Here is a 372-residue protein sequence, read N- to C-terminus: N-methyl-L-tryptophan oxidase (372 aa).

Position 4–34 (4–34 (DLIIIGSGSVGAAAGYYATRAGLNVLMTDAH)) interacts with FAD. Cysteine 308 carries the S-8alpha-FAD cysteine modification.

Belongs to the MSOX/MTOX family. MTOX subfamily. In terms of assembly, monomer. FAD serves as cofactor.

The enzyme catalyses N(alpha)-methyl-L-tryptophan + O2 + H2O = L-tryptophan + formaldehyde + H2O2. Catalyzes the oxidative demethylation of N-methyl-L-tryptophan. In Escherichia coli O17:K52:H18 (strain UMN026 / ExPEC), this protein is N-methyl-L-tryptophan oxidase.